The sequence spans 450 residues: Phosphoglucosamine mutase (450 aa).

The active-site Phosphoserine intermediate is the Ser103. Mg(2+)-binding residues include Ser103, Asp243, Asp245, and Asp247. Ser103 carries the post-translational modification Phosphoserine.

It belongs to the phosphohexose mutase family. The cofactor is Mg(2+). Activated by phosphorylation.

The enzyme catalyses alpha-D-glucosamine 1-phosphate = D-glucosamine 6-phosphate. Its function is as follows. Catalyzes the conversion of glucosamine-6-phosphate to glucosamine-1-phosphate. The chain is Phosphoglucosamine mutase from Latilactobacillus sakei subsp. sakei (strain 23K) (Lactobacillus sakei subsp. sakei).